A 399-amino-acid polypeptide reads, in one-letter code: uncharacterized protein (399 aa).

10 consecutive transmembrane segments (helical) span residues 7–27 (FSAL…LYLI), 33–53 (FLQI…FEVP), 79–99 (AFFP…IWAL), 131–151 (LLIT…SLNI), 153–173 (FPFL…SVFI), 208–228 (VLLI…ISRY), 242–262 (SLGY…TLTI), 296–316 (PLGI…HPIV), 335–355 (LNSG…GIIS), and 357–377 (AFGL…PIIL).

The protein belongs to the major facilitator superfamily. Drug:H(+) antiporter-3 (DHA3) (TC 2.A.1.21) family.

It localises to the cell membrane. This is an uncharacterized protein from Bacillus subtilis (strain 168).